The primary structure comprises 354 residues: UDP-N-acetylglucosamine--N-acetylmuramyl-(pentapeptide) pyrophosphoryl-undecaprenol N-acetylglucosamine transferase (354 aa).

Residues 15 to 17 (TGG), Asn127, Arg163, Ser191, Ile244, 263 to 268 (ALTVSE), and Gln288 each bind UDP-N-acetyl-alpha-D-glucosamine.

This sequence belongs to the glycosyltransferase 28 family. MurG subfamily.

It localises to the cell inner membrane. It carries out the reaction di-trans,octa-cis-undecaprenyl diphospho-N-acetyl-alpha-D-muramoyl-L-alanyl-D-glutamyl-meso-2,6-diaminopimeloyl-D-alanyl-D-alanine + UDP-N-acetyl-alpha-D-glucosamine = di-trans,octa-cis-undecaprenyl diphospho-[N-acetyl-alpha-D-glucosaminyl-(1-&gt;4)]-N-acetyl-alpha-D-muramoyl-L-alanyl-D-glutamyl-meso-2,6-diaminopimeloyl-D-alanyl-D-alanine + UDP + H(+). It functions in the pathway cell wall biogenesis; peptidoglycan biosynthesis. Cell wall formation. Catalyzes the transfer of a GlcNAc subunit on undecaprenyl-pyrophosphoryl-MurNAc-pentapeptide (lipid intermediate I) to form undecaprenyl-pyrophosphoryl-MurNAc-(pentapeptide)GlcNAc (lipid intermediate II). The sequence is that of UDP-N-acetylglucosamine--N-acetylmuramyl-(pentapeptide) pyrophosphoryl-undecaprenol N-acetylglucosamine transferase from Serratia proteamaculans (strain 568).